Reading from the N-terminus, the 258-residue chain is MGQTIKEIKARLAELTDLSAKEFLEFETDERAGVQAALKSRKKQILAECAEDERLEQMLEFEKELYSQEIELIAGIDEVGRGALAGPVVTAAVILPKNCKIRGLNDSKKVPKSKHHAILSEIQEKALAIGIGIVDAEKIDEVNIYEATKIAMIQAVSKLSLKPEHLLIDAMVLDLPIAQTKIIHGDARSASIAAASIVAKVTRDEMMKDFALEFPEYDFEHNAGYGTAKHLAALTKYGITRIHRKSYEPIKSMVNFKY.

Residues Glu-71–Tyr-258 form the RNase H type-2 domain. Residues Asp-77, Glu-78, and Asp-169 each coordinate a divalent metal cation.

Belongs to the RNase HII family. It depends on Mn(2+) as a cofactor. Mg(2+) is required as a cofactor.

It is found in the cytoplasm. It carries out the reaction Endonucleolytic cleavage to 5'-phosphomonoester.. Functionally, endonuclease that specifically degrades the RNA of RNA-DNA hybrids. The polypeptide is Ribonuclease HII (Lactococcus lactis subsp. cremoris (strain SK11)).